The chain runs to 570 residues: Rho GTPase-activating protein gacEE (570 aa).

The PH domain occupies 127–233 (NSDISGVLLK…WVTTINNCID (107 aa)). The region spanning 224–343 (WVTTINNCID…PNGSEISLWL (120 aa)) is the C2 domain. Ca(2+) contacts are provided by D260, D266, D312, D314, and D320. The Rho-GAP domain occupies 381-567 (NSLEAIVKNR…FVFENSQQIL (187 aa)).

Ca(2+) is required as a cofactor.

The protein resides in the cytoplasm. Its function is as follows. Rho GTPase-activating protein involved in the signal transduction pathway. The sequence is that of Rho GTPase-activating protein gacEE (gacEE) from Dictyostelium discoideum (Social amoeba).